A 126-amino-acid chain; its full sequence is Glycine cleavage system H protein (126 aa).

The Lipoyl-binding domain maps to 21–103 (TVTIGISEHA…YEGGWIVKVK (83 aa)). Lysine 62 bears the N6-lipoyllysine mark.

The protein belongs to the GcvH family. As to quaternary structure, the glycine cleavage system is composed of four proteins: P, T, L and H. (R)-lipoate is required as a cofactor.

Its function is as follows. The glycine cleavage system catalyzes the degradation of glycine. The H protein shuttles the methylamine group of glycine from the P protein to the T protein. In Vibrio atlanticus (strain LGP32) (Vibrio splendidus (strain Mel32)), this protein is Glycine cleavage system H protein.